Consider the following 67-residue polypeptide: Protein AaeX (67 aa).

2 helical membrane passes run 8–28 and 47–67; these read VLFG…LPLF and PALF…WLFI.

Belongs to the AaeX family.

The protein localises to the cell membrane. The polypeptide is Protein AaeX (Edwardsiella piscicida).